The sequence spans 427 residues: Peptidase B (427 aa).

Lys-195 and Asp-200 together coordinate Mn(2+). Residue Lys-207 is part of the active site. Mn(2+)-binding residues include Asp-218, Asp-277, and Glu-279. The active site involves Arg-281.

It belongs to the peptidase M17 family. In terms of assembly, homohexamer. Mn(2+) is required as a cofactor.

It is found in the cytoplasm. It catalyses the reaction Release of an N-terminal amino acid, Xaa, from a peptide or arylamide. Xaa is preferably Glu or Asp but may be other amino acids, including Leu, Met, His, Cys and Gln.. Probably plays an important role in intracellular peptide degradation. The protein is Peptidase B of Citrobacter koseri (strain ATCC BAA-895 / CDC 4225-83 / SGSC4696).